We begin with the raw amino-acid sequence, 685 residues long: Nucleolar protein 4 (685 aa).

A disordered region spans residues 1 to 21 (MEETIENVEVPSSNVSKQNDD). Positions 26–103 (KTLFVRSIPQ…HILRVDIAKR (78 aa)) constitute an RRM 1 domain. Residues 106–123 (RSKKTSEVVEKSTPESSE) show a composition bias toward basic and acidic residues. The interval 106-142 (RSKKTSEVVEKSTPESSEKITGQNNEDEDDADGEDSM) is disordered. Residues 130-140 (NEDEDDADGED) show a composition bias toward acidic residues. Positions 147-225 (PKLIIRNMPW…RKVAVDFAVQ (79 aa)) constitute an RRM 2 domain. Basic and acidic residues predominate over residues 231–242 (DYKKAQPEMNDK). The disordered stretch occupies residues 231–285 (DYKKAQPEMNDKDDNESGNEDAEENHDDEEDENEEEDRQVDQASKNKESKRKAQN). Positions 243–268 (DDNESGNEDAEENHDDEEDENEEEDR) are enriched in acidic residues. Ser247 is subject to Phosphoserine. 2 RRM domains span residues 290-383 (FSVF…PTLV) and 462-612 (TRLA…FAIE). Position 379 is a phosphothreonine (Thr379). The span at 622-631 (EQLKQARTKR) shows a compositional bias: basic residues. A disordered region spans residues 622-685 (EQLKQARTKR…FKRKRKHAKK (64 aa)). Residues 645–672 (SENKKPKKEEATTPTNPDDKKMGDDIKR) show a composition bias toward basic and acidic residues. A compositionally biased stretch (basic residues) spans 674–685 (IGFKRKRKHAKK).

As to quaternary structure, interacts with NOP1.

The protein localises to the nucleus. It localises to the nucleolus. Its function is as follows. Required for 60S ribosomal subunit synthesis. Probably involved in the processing of 27S rRNA to produce mature 25S rRNA. The chain is Nucleolar protein 4 (NOP4) from Saccharomyces cerevisiae (strain ATCC 204508 / S288c) (Baker's yeast).